A 60-amino-acid chain; its full sequence is Large ribosomal subunit protein bL32 (60 aa).

A compositionally biased stretch (basic residues) spans 1–16 (MAVPKRKTTPSKRGMR). The disordered stretch occupies residues 1 to 60 (MAVPKRKTTPSKRGMRRSADALKQPAYVENPDSGELHRPHHVDLKSGMYRGKQILKPKGE). A compositionally biased stretch (basic and acidic residues) spans 34 to 44 (GELHRPHHVDL).

The protein belongs to the bacterial ribosomal protein bL32 family.

The chain is Large ribosomal subunit protein bL32 from Parvibaculum lavamentivorans (strain DS-1 / DSM 13023 / NCIMB 13966).